The following is a 302-amino-acid chain: MLWRILTCCKSPEEDKDEHKKKPPNVGHAHLSVVSPLNELASEKSRSSLCIEWTIDSLRQFVQQLSVRQNMSKDRREALTYFINSYNDLFHDVYYGDGRSMSKTEEAQTIVTFTIGSYLYKYTHPSELFWQRLSDNMANIEDDGTCTEAQLAFRKRAALSKLGHPAFHFLPMNNKESFHYAWSLFTSTYFQKAATVSPSPNQQPVDSVANPQLRKASEITTISSRSDVDILLGKFKALIQESPDEHCNSWIQRIYITCVLPRNHYIYLLNEQVDFLTSIEIMKNQVTEGKLCLLNEDLGTLN.

Has a role in meiosis. The chain is Meiotically up-regulated gene 129 protein (mug129) from Schizosaccharomyces pombe (strain 972 / ATCC 24843) (Fission yeast).